We begin with the raw amino-acid sequence, 60 residues long: Large ribosomal subunit protein uL30 (60 aa).

Belongs to the universal ribosomal protein uL30 family. Part of the 50S ribosomal subunit.

In Streptococcus thermophilus (strain CNRZ 1066), this protein is Large ribosomal subunit protein uL30.